We begin with the raw amino-acid sequence, 593 residues long: Numb-related protein 1 (593 aa).

4 disordered regions span residues 1–97 (MSAS…WQPD), 235–278 (TAQV…NSRS), 331–375 (LRQG…FGTQ), and 493–581 (MSMS…DPFD). Phosphoserine; by PKC is present on serine 17. Polar residues predominate over residues 27–37 (QNSLVSEQQPS). Residues 64–74 (RSLRLPKKRRD) show a composition bias toward basic residues. Position 65 is a phosphoserine; by PKC (serine 65). The PID domain occupies 102 to 255 (RTGTCCFNVK…STSSTPPKDI (154 aa)). Polar residues-rich tracts occupy residues 236-251 (AQVNVQSAQESTSSTP), 261-278 (EDNTSEGTSTQNPSNSRS), and 354-364 (SLRTVSNNPTE). Residues 493–511 (MSMSPTSPSSDPPSTSSYS) are compositionally biased toward low complexity. Residues 516 to 528 (SGPPPAHAPPPLP) are compositionally biased toward pro residues. A compositionally biased stretch (polar residues) spans 532–565 (AVSNGSPSIYQQQLQQANSTRNSPAGINWNSSPN).

Interacts with pkc-3. In terms of tissue distribution, expressed in cells comprising the intestine, pharyngeal cells, the anal sphincter and depressor muscles.

It is found in the cytoplasm. The protein localises to the cell cortex. It localises to the cytoskeleton. Its subcellular location is the membrane. Functionally, involved in the tethering and targeting of pkc-3 to modulate the intracellular distribution of the kinase. The complex formed with pkc-3 complexes are likely to be involved in assembly, maintenance, and/or regulation of protein complexes that execute asymmetric and/or polarized cell functions. This is Numb-related protein 1 from Caenorhabditis elegans.